The following is a 643-amino-acid chain: Coiled-coil domain-containing protein 8 (643 aa).

The disordered stretch occupies residues 93 to 124 (VGTYDSSNGSDSELSDFDTSKVKGNRGSGKTR). Residues Ser141 and Ser144 each carry the phosphoserine modification. Disordered regions lie at residues 156 to 191 (RRGEKKPSAPPPRRRVNLPVPMFENNLGPQPSKGDR), 206 to 492 (QRVR…TPRA), 519 to 540 (IDSQRAEGPVNQSTGATENQRV), 553 to 577 (DQREEAGPQAILEASADSGSRARKQ), and 603 to 643 (PRLP…EEQL). Polar residues predominate over residues 218–227 (EVGQAQQSSI). A compositionally biased stretch (basic and acidic residues) spans 230–247 (RAGEMRHSHTSPDLDDSS). Residues 248–259 (RNTGDLSDQTLI) are compositionally biased toward polar residues. The segment covering 261 to 276 (RRWKPKIKWVSLRRCR) has biased composition (basic residues). 3 stretches are compositionally biased toward low complexity: residues 294 to 399 (AAEN…AEAA), 409 to 432 (NPRTEAAANPRAEAAVNPRAEATA), and 459 to 473 (RVEAAASLRVEAAAS). Polar residues predominate over residues 528–537 (VNQSTGATEN). The PxLPxI/L motif; mediates interaction with ANKRA2 motif lies at 603–609 (PRLPTLP). Residues 626–643 (LRADTRADMEHREQEEQL) are compositionally biased toward basic and acidic residues.

In terms of assembly, component of the 3M complex, composed of core components CUL7, CCDC8 and OBSL1. Interacts (via PxLPxI/L motif) with ANKRA2 (via ankyrin repeats); may link the 3M complex to histone deacetylases including HDAC4 and HDAC5.

Its subcellular location is the cytoplasm. The protein resides in the cytoskeleton. The protein localises to the microtubule organizing center. It localises to the centrosome. Core component of the 3M complex, a complex required to regulate microtubule dynamics and genome integrity. It is unclear how the 3M complex regulates microtubules, it could act by controlling the level of a microtubule stabilizer. Required for localization of CUL7 to the centrosome. This chain is Coiled-coil domain-containing protein 8 (Ccdc8), found in Rattus norvegicus (Rat).